A 90-amino-acid chain; its full sequence is Mitochondrial import inner membrane translocase subunit Tim10 (90 aa).

A Twin CX3C motif motif is present at residues 29–54 (CHRKCVPPHYKEAELSKGESVCLDRC). 2 cysteine pairs are disulfide-bonded: Cys29-Cys54 and Cys33-Cys50.

This sequence belongs to the small Tim family. Heterohexamer; composed of 3 copies of TIMM9 and 3 copies of TIMM10/TIM10A, named soluble 70 kDa complex. The complex forms a 6-bladed alpha-propeller structure and associates with the TIMM22 component of the TIM22 complex. Interacts with multi-pass transmembrane proteins in transit. Also forms a complex composed of TIMM9, TIMM10/TIM10A and FXC1/TIM10B.

It is found in the mitochondrion inner membrane. Functionally, mitochondrial intermembrane chaperone that participates in the import and insertion of multi-pass transmembrane proteins into the mitochondrial inner membrane. May also be required for the transfer of beta-barrel precursors from the TOM complex to the sorting and assembly machinery (SAM complex) of the outer membrane. Acts as a chaperone-like protein that protects the hydrophobic precursors from aggregation and guide them through the mitochondrial intermembrane space. This Bos taurus (Bovine) protein is Mitochondrial import inner membrane translocase subunit Tim10 (TIMM10).